A 294-amino-acid polypeptide reads, in one-letter code: 33 kDa chaperonin (294 aa).

Disulfide bonds link Cys238/Cys240 and Cys271/Cys274.

This sequence belongs to the HSP33 family. Post-translationally, under oxidizing conditions two disulfide bonds are formed involving the reactive cysteines. Under reducing conditions zinc is bound to the reactive cysteines and the protein is inactive.

Its subcellular location is the cytoplasm. Redox regulated molecular chaperone. Protects both thermally unfolding and oxidatively damaged proteins from irreversible aggregation. Plays an important role in the bacterial defense system toward oxidative stress. In Thermoanaerobacter pseudethanolicus (strain ATCC 33223 / 39E) (Clostridium thermohydrosulfuricum), this protein is 33 kDa chaperonin.